We begin with the raw amino-acid sequence, 464 residues long: Glycine receptor subunit alpha-3 (464 aa).

The N-terminal stretch at 1 to 33 is a signal peptide; sequence MAHVRHFRTLLSGFYFWEAALLLSLVATKETNS. The Extracellular portion of the chain corresponds to 34–255; the sequence is ARSRSAPMSP…RFHLERQMGY (222 aa). N71 carries an N-linked (GlcNAc...) asparagine glycan. C171 and C185 are oxidised to a cystine. E225 and D227 together coordinate Zn(2+). Residues C231 and C242 are joined by a disulfide bond. Residue 235–240 coordinates strychnine; the sequence is YNTGKF. H248 serves as a coordination point for Zn(2+). A helical membrane pass occupies residues 256 to 277; that stretch reads YLIQMYIPSLLIVILSWVSFWI. Residues 278-282 lie on the Cytoplasmic side of the membrane; it reads NMDAA. A helical membrane pass occupies residues 283–303; it reads PARVALGITTVLTMTTQSSGS. Topologically, residues 304 to 314 are extracellular; the sequence is RASLPKVSYVK. Residues 315–335 form a helical membrane-spanning segment; the sequence is AIDIWMAVCLLFVFSALLEYA. At 336–430 the chain is on the cytoplasmic side; that stretch reads AVNFVSRQHK…FIDRAKKIDT (95 aa). S370 carries the phosphoserine modification. S379 carries the post-translational modification Phosphoserine; by PKA. The chain crosses the membrane as a helical span at residues 431–451; that stretch reads ISRACFPLAFLIFNIFYWVIY. The Extracellular segment spans residues 452 to 464; the sequence is KILRHEDIHHQQD.

Belongs to the ligand-gated ion channel (TC 1.A.9) family. Glycine receptor (TC 1.A.9.3) subfamily. GLRA3 sub-subfamily. As to quaternary structure, homopentamer (in vitro). Heteropentamer composed of GLRA3 and GLRB. Both homopentamers and heteropentamers form functional ion channels, but their characteristics are subtly different. Post-translationally, phosphorylated by PKA; this causes down-regulation of channel activity.

The protein resides in the postsynaptic cell membrane. It is found in the perikaryon. Its subcellular location is the cell projection. It localises to the dendrite. The protein localises to the synapse. The protein resides in the cell membrane. It catalyses the reaction chloride(in) = chloride(out). Low levels of Zn(2+) ions (1 uM) increase glycine sensitivity and decrease the glycine concentration required for half-maximal channel activity. Channel activity is strongly enhanced by ethanol. Inhibited by picrotoxin. Inhibited by prostaglandin E2, probably via PKA-mediated phosphorylation at Ser-379. Its function is as follows. Glycine receptors are ligand-gated chloride channels. Channel opening is triggered by extracellular glycine. Channel characteristics depend on the subunit composition; heteropentameric channels display faster channel closure. Plays an important role in the down-regulation of neuronal excitability. Contributes to the generation of inhibitory postsynaptic currents. Contributes to increased pain perception in response to increased prostaglandin E2 levels. Plays a role in cellular responses to ethanol. The chain is Glycine receptor subunit alpha-3 (Glra3) from Rattus norvegicus (Rat).